The following is a 208-amino-acid chain: MVLDELISEFDRGLRSLTGISRMSRPVPVPAEPTVGELTPAERAHAAGLMRVNHVGEVCAQALYQAQKLTARSASSKAMFEEAAREEEDHLAWTAHRLKELDSRPSLLNPLWYAGALAIGVAAGTLGDKVSLGFMAETERQVESHLDGHLSELPATDTASRAIVEQMRVDEVKHGKAATDAGGIELPLPARMLMRAASKVMTRTAYYL.

The Fe cation site is built by glutamate 57, glutamate 87, histidine 90, glutamate 139, glutamate 171, and histidine 174.

It belongs to the COQ7 family. It depends on Fe cation as a cofactor.

It localises to the cell membrane. The catalysed reaction is a 5-methoxy-2-methyl-3-(all-trans-polyprenyl)benzene-1,4-diol + AH2 + O2 = a 3-demethylubiquinol + A + H2O. Its pathway is cofactor biosynthesis; ubiquinone biosynthesis. Functionally, catalyzes the hydroxylation of 2-nonaprenyl-3-methyl-6-methoxy-1,4-benzoquinol during ubiquinone biosynthesis. The chain is 3-demethoxyubiquinol 3-hydroxylase from Burkholderia ambifaria (strain ATCC BAA-244 / DSM 16087 / CCUG 44356 / LMG 19182 / AMMD) (Burkholderia cepacia (strain AMMD)).